Reading from the N-terminus, the 244-residue chain is Carbonyl reductase [NADPH] 2 (244 aa).

Position 11 to 39 (11 to 39 (LVTGAGKGIGRDTVKALHVSGARVVAVTR)) interacts with NADP(+). A substrate-binding site is contributed by Ser136. The active-site Proton acceptor is the Tyr149. Phosphoserine is present on Ser176.

The protein belongs to the short-chain dehydrogenases/reductases (SDR) family. In terms of assembly, homotetramer. Lung (ciliated cells, non-ciliated bronchiolar cells and type-II alveolar pneumocytes). Low expression in all extrapulmonary tissues, including adipose tissue.

The protein resides in the mitochondrion matrix. It catalyses the reaction a secondary alcohol + NADP(+) = a ketone + NADPH + H(+). Allosteric enzyme exhibiting negative cooperativity. Activated 2-5 fold by fatty acids. May function in the pulmonary metabolism of endogenous carbonyl compounds, such as aliphatic aldehydes and ketones derived from lipid peroxidation, 3-ketosteroids and fatty aldehydes, as well as in xenobiotic metabolism. The polypeptide is Carbonyl reductase [NADPH] 2 (CBR2) (Sus scrofa (Pig)).